The following is a 67-amino-acid chain: Phycobilisome 7.8 kDa linker polypeptide, allophycocyanin-associated, core (67 aa).

The region spanning 1 to 56 is the CpcD-like domain; the sequence is GRLFKITACVPSQTRIRTQRELQNTYFTKLVPYENWFREQQRIQKMGGKIVKVELA.

The protein belongs to the phycobilisome linker protein family.

It localises to the cellular thylakoid membrane. Its function is as follows. Rod linker protein, associated with allophycocyanin. Linker polypeptides determine the state of aggregation and the location of the disk-shaped phycobiliprotein units within the phycobilisome and modulate their spectroscopic properties in order to mediate a directed and optimal energy transfer. The protein is Phycobilisome 7.8 kDa linker polypeptide, allophycocyanin-associated, core (apcC) of Mastigocladus laminosus (Fischerella sp.).